A 573-amino-acid chain; its full sequence is Glutamate--tRNA ligase (573 aa).

The 'HIGH' region signature appears at 107 to 117 (PNPDGAFHLGN).

Belongs to the class-I aminoacyl-tRNA synthetase family. Glutamate--tRNA ligase type 2 subfamily.

The protein localises to the cytoplasm. It carries out the reaction tRNA(Glu) + L-glutamate + ATP = L-glutamyl-tRNA(Glu) + AMP + diphosphate. Functionally, catalyzes the attachment of glutamate to tRNA(Glu) in a two-step reaction: glutamate is first activated by ATP to form Glu-AMP and then transferred to the acceptor end of tRNA(Glu). The polypeptide is Glutamate--tRNA ligase (Thermococcus kodakarensis (strain ATCC BAA-918 / JCM 12380 / KOD1) (Pyrococcus kodakaraensis (strain KOD1))).